The primary structure comprises 667 residues: uncharacterized protein (667 aa).

This is an uncharacterized protein from Magallana gigas (Pacific oyster).